Reading from the N-terminus, the 1744-residue chain is Transcription initiation factor TFIID subunit 1 (1744 aa).

6 disordered regions span residues 1 to 65 (MNNT…EKNE), 248 to 275 (VSIR…APNS), 429 to 488 (PEDR…DNDP), 1001 to 1024 (QNQT…DSDN), 1071 to 1098 (TTNQ…SQFG), and 1186 to 1213 (MKKN…PPNP). Over residues 43–52 (ACSSASNGGS) the composition is skewed to polar residues. Residues 55–64 (VKMEPKVEKN) are compositionally biased toward basic and acidic residues. Basic and acidic residues predominate over residues 429–439 (PEDRRHDEGPD). The span at 440 to 449 (HHHHHHHHRK) shows a compositional bias: basic residues. The span at 477–488 (ESTMAQFTDNDP) shows a compositional bias: polar residues. Positions 1012 to 1024 (STDDDSTDADSDN) are enriched in acidic residues. Coiled-coil stretches lie at residues 1019 to 1080 (DADS…KGEK), 1161 to 1204 (YAQM…TEKK), and 1282 to 1314 (NFAE…RQMA). Basic and acidic residues-rich tracts occupy residues 1076–1093 (EKGE…EKKS) and 1186–1205 (MKKN…EKKV). A compositionally biased stretch (gly residues) spans 1319–1344 (YGGGASSSGGAGGGGSGIGGSTGGGI). The segment at 1319–1391 (YGGGASSSGG…SKRRSSMMPE (73 aa)) is disordered. Over residues 1354 to 1363 (SQISGTSSFL) the composition is skewed to polar residues. Residues 1372–1381 (GGNRNSSVSG) are compositionally biased toward low complexity. Residues 1379-1386 (VSGSKRRS) carry the Nuclear localization signal motif. Bromo domains follow at residues 1404–1512 (RARA…MIER) and 1537–1634 (YLLG…VKDQ). Residues 1666–1694 (DHMDEMEDHPTEEEEEDDDDEIMDDDMDI) are compositionally biased toward acidic residues. Disordered regions lie at residues 1666–1702 (DHMD…YSYD) and 1714–1744 (NDLA…LDSF).

It belongs to the TAF1 family. Component of the TFIID basal transcription factor complex, composed of TATA-box-binding protein tbp-1, and a number of TBP-associated factors (TAFs).

It is found in the nucleus. In terms of biological role, the TFIID basal transcription factor complex plays a major role in the initiation of RNA polymerase II (Pol II)-dependent transcription. TFIID recognizes and binds promoters via its subunit tbp-1, a TATA-box-binding protein, and promotes assembly of the pre-initiation complex (PIC). The TFIID complex consists of tbp-1 and TBP-associated factors (TAFs), including taf-1. May regulate RNA polymerase II activity and thereby may control transcription initiation by RNA polymerase II. Required for early embryonic development. Essential for embryonic transcription of several genes. In Caenorhabditis elegans, this protein is Transcription initiation factor TFIID subunit 1.